The primary structure comprises 678 residues: Serine/threonine-protein kinase mph1 (678 aa).

2 disordered regions span residues lysine 39 to leucine 93 and leucine 114 to valine 209. Composition is skewed to polar residues over residues aspartate 41–alanine 66 and leucine 114–serine 125. The Protein kinase domain maps to phenylalanine 316–proline 607. Residues valine 322–valine 330 and lysine 345 each bind ATP. Aspartate 442 serves as the catalytic Proton acceptor.

It belongs to the protein kinase superfamily. Ser/Thr protein kinase family.

The catalysed reaction is L-seryl-[protein] + ATP = O-phospho-L-seryl-[protein] + ADP + H(+). It carries out the reaction L-threonyl-[protein] + ATP = O-phospho-L-threonyl-[protein] + ADP + H(+). The enzyme catalyses L-tyrosyl-[protein] + ATP = O-phospho-L-tyrosyl-[protein] + ADP + H(+). Its function is as follows. Involved in mitotic spindle assembly checkpoint signaling, a process that delays anaphase until chromosomes are bioriented on the spindle, and in the repair of incorrect mitotic kinetochore-spindle microtubule attachments. Phosphorylates spc7/knl1 on MELT motifs; phosphorylation is required for recruitment of the BUB1-BUB3 complex to kinetochores. This Schizosaccharomyces pombe (strain 972 / ATCC 24843) (Fission yeast) protein is Serine/threonine-protein kinase mph1.